Here is a 302-residue protein sequence, read N- to C-terminus: Probable alpha-L-glutamate ligase 1 (302 aa).

One can recognise an ATP-grasp domain in the interval 104–287; it reads MQLLSRKGIG…VANMIIEFIE (184 aa). Residues Lys141, 178 to 179, Asp187, and 211 to 213 each bind ATP; these read EY and RSN. Asp248, Glu260, and Asn262 together coordinate Mg(2+). Asp248, Glu260, and Asn262 together coordinate Mn(2+).

Belongs to the RimK family. Mg(2+) is required as a cofactor. It depends on Mn(2+) as a cofactor.

This Pseudoalteromonas atlantica (strain T6c / ATCC BAA-1087) protein is Probable alpha-L-glutamate ligase 1.